The sequence spans 242 residues: tRNA (guanine-N(1)-)-methyltransferase (242 aa).

Residues Gly-111 and 130–135 (IGDYVL) each bind S-adenosyl-L-methionine.

It belongs to the RNA methyltransferase TrmD family. In terms of assembly, homodimer.

It is found in the cytoplasm. The enzyme catalyses guanosine(37) in tRNA + S-adenosyl-L-methionine = N(1)-methylguanosine(37) in tRNA + S-adenosyl-L-homocysteine + H(+). Its function is as follows. Specifically methylates guanosine-37 in various tRNAs. The chain is tRNA (guanine-N(1)-)-methyltransferase from Aster yellows witches'-broom phytoplasma (strain AYWB).